The chain runs to 1086 residues: Tyrosine-protein kinase receptor svh-2 (1086 aa).

Positions 1 to 34 are cleaved as a signal peptide; sequence MVLGSSQSSAKELTTQSSIFRFLVLLLCFTSATG. At 35–651 the chain is on the extracellular side; that stretch reads GQINGKLLNG…DKKGSSPGWK (617 aa). N-linked (GlcNAc...) asparagine glycosylation is found at Asn-276, Asn-299, Asn-461, Asn-554, and Asn-617. The helical transmembrane segment at 652-672 threads the bilayer; it reads IAIAIISVMTIILIVAIIVYY. The Cytoplasmic segment spans residues 673-1086; it reads MRNRFPRIKT…LLSECSETSV (414 aa). Residues 735–996 enclose the Protein kinase domain; sequence VDKLDPIGQG…SDLVTIIPNV (262 aa). Residues 741–749 and Lys-767 contribute to the ATP site; that span reads IGQGHYGVV. Catalysis depends on Asp-858, which acts as the Proton acceptor. Tyr-890 is subject to Phosphotyrosine. The tract at residues 1056-1086 is disordered; it reads AELPSDSPSTSTAIPQSTPYQLLSECSETSV. Residues 1061 to 1086 are compositionally biased toward polar residues; sequence DSPSTSTAIPQSTPYQLLSECSETSV.

It belongs to the protein kinase superfamily. Tyr protein kinase family. As to quaternary structure, interacts (via cytoplasmic domain) with mlk-1. Interacts with shc-1 (via SH2 domain). May interact (when tyrosine-phosphorylated) with tns-1 (via SH2 domain). May be autophosphorylated on Tyr-890 following dimerization. In terms of tissue distribution, expressed in body wall and vulva muscles, pharynx, intestine, excretory canals, distal tip cells and some neurons. Expressed in D-type motor neurons upon axon injury.

Its subcellular location is the cell membrane. It catalyses the reaction L-tyrosyl-[protein] + ATP = O-phospho-L-tyrosyl-[protein] + ADP + H(+). Functionally, receptor tyrosine kinase which may phosphorylate mlk-1, a component of the mlk-1, mek-1 and kgb-1 pathway. Involved in axon regeneration after injury by promoting the generation of productive and stable growth cones. The polypeptide is Tyrosine-protein kinase receptor svh-2 (Caenorhabditis elegans).